The sequence spans 360 residues: MGSNEEGNPTNNSDKPSQAAAPEQSNVHVYHHDWAAMQAYYGPRVGIPQYYNSNLAPGHAPPPYMWASPSPMMAPYGAPYPPFCPPGGVYAHPGVQMGSQPQGPVSQSASGVTTPLTIDAPANSAGNSDHGFMKKLKEFDGLAMSISNNKVGSAEHSSSEHRSSQSSENDGSSNGSDGNTTGGEQSRRKRRQQRSPSTGERPSSQNSLPLRGENEKPDVTMGTPVMPTAMSFQNSAGMNGVPQPWNEKEVKREKRKQSNRESARRSRLRKQAETEQLSVKVDALVAENMSLRSKLGQLNNESEKLRLENEAILDQLKAQATGKTENLISRVDKNNSVSGSKTVQHQLLNASPITDPVAAS.

The span at 1–16 (MGSNEEGNPTNNSDKP) shows a compositional bias: polar residues. Disordered stretches follow at residues 1-26 (MGSNEEGNPTNNSDKPSQAAAPEQSN) and 150-275 (KVGS…AETE). Residues 164-184 (SQSSENDGSSNGSDGNTTGGE) are compositionally biased toward low complexity. Residues 198-208 (TGERPSSQNSL) are compositionally biased toward polar residues. The span at 246-264 (NEKEVKREKRKQSNRESAR) shows a compositional bias: basic and acidic residues. Residues 249 to 312 (EVKREKRKQS…EKLRLENEAI (64 aa)) enclose the bZIP domain. A basic motif region spans residues 251 to 270 (KREKRKQSNRESARRSRLRK). Residues 277-312 (LSVKVDALVAENMSLRSKLGQLNNESEKLRLENEAI) are leucine-zipper. Residues 335 to 352 (NSVSGSKTVQHQLLNASP) show a composition bias toward polar residues. Residues 335–360 (NSVSGSKTVQHQLLNASPITDPVAAS) are disordered.

It belongs to the bZIP family. In terms of assembly, DNA-binding heterodimer. Interacts with GBF4. Interacts with BZIP16 and BZIP68. As to expression, found in both light and dark grown leaves.

Its subcellular location is the nucleus. Functionally, binds to the G-box motif (5'-CCACGTGG-3') of the rbcS-1A gene promoter. G-box and G-box-like motifs are cis-acting elements defined in promoters of certain plant genes which are regulated by such diverse stimuli as light-induction or hormone control. GBF2 is found to bind asymmetrically to the G-box. This Arabidopsis thaliana (Mouse-ear cress) protein is G-box-binding factor 2 (GBF2).